The following is a 364-amino-acid chain: Probable dual-specificity RNA methyltransferase RlmN (364 aa).

Glu107 acts as the Proton acceptor in catalysis. The region spanning 113–346 is the Radical SAM core domain; sequence HEYGNSVCVT…ATIRREQGAD (234 aa). A disulfide bridge links Cys120 with Cys351. The [4Fe-4S] cluster site is built by Cys127, Cys131, and Cys134. S-adenosyl-L-methionine-binding positions include 177–178, Ser209, 232–234, and Asn308; these read GE and SLH. The S-methylcysteine intermediate role is filled by Cys351.

Belongs to the radical SAM superfamily. RlmN family. The cofactor is [4Fe-4S] cluster.

The protein resides in the cytoplasm. The enzyme catalyses adenosine(2503) in 23S rRNA + 2 reduced [2Fe-2S]-[ferredoxin] + 2 S-adenosyl-L-methionine = 2-methyladenosine(2503) in 23S rRNA + 5'-deoxyadenosine + L-methionine + 2 oxidized [2Fe-2S]-[ferredoxin] + S-adenosyl-L-homocysteine. The catalysed reaction is adenosine(37) in tRNA + 2 reduced [2Fe-2S]-[ferredoxin] + 2 S-adenosyl-L-methionine = 2-methyladenosine(37) in tRNA + 5'-deoxyadenosine + L-methionine + 2 oxidized [2Fe-2S]-[ferredoxin] + S-adenosyl-L-homocysteine. Functionally, specifically methylates position 2 of adenine 2503 in 23S rRNA and position 2 of adenine 37 in tRNAs. Confers resistance to some classes of antibiotics. This is Probable dual-specificity RNA methyltransferase RlmN from Staphylococcus saprophyticus subsp. saprophyticus (strain ATCC 15305 / DSM 20229 / NCIMB 8711 / NCTC 7292 / S-41).